Reading from the N-terminus, the 114-residue chain is MEGDVLSGFGDRHNMDGKLLQSFQKSFVDVQDILDQNRLLINEINQNHESKQPDNLGRNVGLIKELNNNIRRVASLYGDLSHSFARSVDASSEGESSGTLKSDGKANQKRFRSG.

A disordered region spans residues 87–114 (SVDASSEGESSGTLKSDGKANQKRFRSG). Residues 89–100 (DASSEGESSGTL) are compositionally biased toward polar residues.

Belongs to the EARLY FLOWERING 4 family. As to quaternary structure, homodimer.

The protein resides in the nucleus. In terms of biological role, component of the central CCA1/LHY-TOC1 feedback loop in the circadian clock that promotes clock accuracy and is required for sustained rhythms in the absence of daily light/dark cycles. The protein is Protein ELF4-LIKE 4 (EFL4) of Arabidopsis thaliana (Mouse-ear cress).